The sequence spans 346 residues: Uroporphyrinogen decarboxylase (346 aa).

Substrate contacts are provided by residues 23-27 (RQAGR), aspartate 73, tyrosine 151, serine 206, and histidine 321.

The protein belongs to the uroporphyrinogen decarboxylase family. In terms of assembly, homodimer.

Its subcellular location is the cytoplasm. The enzyme catalyses uroporphyrinogen III + 4 H(+) = coproporphyrinogen III + 4 CO2. It functions in the pathway porphyrin-containing compound metabolism; protoporphyrin-IX biosynthesis; coproporphyrinogen-III from 5-aminolevulinate: step 4/4. Functionally, catalyzes the decarboxylation of four acetate groups of uroporphyrinogen-III to yield coproporphyrinogen-III. This is Uroporphyrinogen decarboxylase from Aliarcobacter butzleri (strain RM4018) (Arcobacter butzleri).